The chain runs to 70 residues: Cold shock-like protein CspJ (70 aa).

Residues 7 to 67 (GLVKWFNPEK…GPKGPSAVNV (61 aa)) form the CSD domain.

It is found in the cytoplasm. This chain is Cold shock-like protein CspJ (cspJ), found in Salmonella typhimurium (strain SL1344).